Here is a 461-residue protein sequence, read N- to C-terminus: Phosphomethylpyrimidine synthase (461 aa).

Residues N80, M109, Y139, H174, 194-196 (SRG), 235-238 (DSLR), and E274 each bind substrate. H278 is a binding site for Zn(2+). Y301 serves as a coordination point for substrate. H342 contributes to the Zn(2+) binding site. [4Fe-4S] cluster contacts are provided by C422, C425, and C430.

The protein belongs to the ThiC family. As to quaternary structure, homodimer. Requires [4Fe-4S] cluster as cofactor.

It catalyses the reaction 5-amino-1-(5-phospho-beta-D-ribosyl)imidazole + S-adenosyl-L-methionine = 4-amino-2-methyl-5-(phosphooxymethyl)pyrimidine + CO + 5'-deoxyadenosine + formate + L-methionine + 3 H(+). The protein operates within cofactor biosynthesis; thiamine diphosphate biosynthesis. Functionally, catalyzes the synthesis of the hydroxymethylpyrimidine phosphate (HMP-P) moiety of thiamine from aminoimidazole ribotide (AIR) in a radical S-adenosyl-L-methionine (SAM)-dependent reaction. In Nautilia profundicola (strain ATCC BAA-1463 / DSM 18972 / AmH), this protein is Phosphomethylpyrimidine synthase.